Reading from the N-terminus, the 141-residue chain is Large ribosomal subunit protein uL6 (141 aa).

The protein belongs to the universal ribosomal protein uL6 family.

The chain is Large ribosomal subunit protein uL6 from Haemonchus contortus (Barber pole worm).